The primary structure comprises 334 residues: Glyceraldehyde-3-phosphate dehydrogenase (334 aa).

Residues 12–13 and Gly111 contribute to the NAD(+) site; that span reads TI. 140–142 provides a ligand contact to D-glyceraldehyde 3-phosphate; it reads SCN. Cys141 functions as the Nucleophile in the catalytic mechanism. Arg167 contacts NAD(+). 192–193 contributes to the D-glyceraldehyde 3-phosphate binding site; the sequence is HG. NAD(+) is bound at residue Gln298.

It belongs to the glyceraldehyde-3-phosphate dehydrogenase family. Homotetramer.

The protein resides in the cytoplasm. The enzyme catalyses D-glyceraldehyde 3-phosphate + phosphate + NADP(+) = (2R)-3-phospho-glyceroyl phosphate + NADPH + H(+). The catalysed reaction is D-glyceraldehyde 3-phosphate + phosphate + NAD(+) = (2R)-3-phospho-glyceroyl phosphate + NADH + H(+). Its pathway is carbohydrate degradation; glycolysis; pyruvate from D-glyceraldehyde 3-phosphate: step 1/5. This is Glyceraldehyde-3-phosphate dehydrogenase (gap) from Pyrococcus abyssi (strain GE5 / Orsay).